A 216-amino-acid polypeptide reads, in one-letter code: MSRDQGSTEYDANQRQEQHQEQHNTSYTHTDVRTNIPNIPAPFISTGVSGLGQQLVGEGFTASAARISGQSSETHVQMTPEMEAEARKDRERYERELQAINERHQRDIEGKTEAYRKQAEQEAERLRKELEKQHQRDIEFRKSLVQGTIENQKRQVELEAQLAKRELDREARLATQALDQSKMATDVQVNFDSAVGHTVSGATTVSQSEKVTQSKH.

The span at 1–11 (MSRDQGSTEYD) shows a compositional bias: polar residues. Disordered stretches follow at residues 1-34 (MSRDQGSTEYDANQRQEQHQEQHNTSYTHTDVRT) and 66-91 (RISGQSSETHVQMTPEMEAEARKDRE). Positions 12–22 (ANQRQEQHQEQ) are enriched in basic and acidic residues. Composition is skewed to polar residues over residues 25–34 (TSYTHTDVRT) and 68–77 (SGQSSETHVQ). A coiled-coil region spans residues 81-180 (EMEAEARKDR…ARLATQALDQ (100 aa)). CAHS motif stretches follow at residues 115 to 133 (YRKQAEQEAERLRKELEKQ) and 152 to 170 (QKRQVELEAQLAKRELDRE).

This sequence belongs to the Cytosolic-abundant heat soluble protein (CAHS) family.

Its subcellular location is the cytoplasm. Its function is as follows. CAHS proteins are cytosolic heat soluble proteins that seem to contribute to the anhydrobiosis in tardigrades, but their specific mechanisms are yet to be identified. It is possible that protection during anhydrobiosis might occur via the stabilization of vitrifying small molecules such as sugars, but not via the direct glass transition of CAHS proteins themselves. The polypeptide is Cytosolic-abundant heat soluble protein 2 (Ramazzottius varieornatus (Water bear)).